The sequence spans 525 residues: uncharacterized protein (525 aa).

Composition is skewed to polar residues over residues Leu-139–Gly-149 and Ser-336–Ser-349. 2 disordered regions span residues Leu-139–Pro-158 and Pro-330–Thr-356.

This is an uncharacterized protein from Treponema pallidum (strain Nichols).